A 347-amino-acid chain; its full sequence is Quinolinate synthase (347 aa).

The iminosuccinate site is built by histidine 47 and serine 68. [4Fe-4S] cluster is bound at residue cysteine 113. Residues 139–141 and serine 156 contribute to the iminosuccinate site; that span reads YAN. Residue cysteine 200 coordinates [4Fe-4S] cluster. Iminosuccinate contacts are provided by residues 226–228 and threonine 243; that span reads HPE. Cysteine 297 is a binding site for [4Fe-4S] cluster.

Belongs to the quinolinate synthase family. Type 1 subfamily. It depends on [4Fe-4S] cluster as a cofactor.

It localises to the cytoplasm. The catalysed reaction is iminosuccinate + dihydroxyacetone phosphate = quinolinate + phosphate + 2 H2O + H(+). It participates in cofactor biosynthesis; NAD(+) biosynthesis; quinolinate from iminoaspartate: step 1/1. Its function is as follows. Catalyzes the condensation of iminoaspartate with dihydroxyacetone phosphate to form quinolinate. The protein is Quinolinate synthase of Shigella flexneri serotype 5b (strain 8401).